The sequence spans 322 residues: uncharacterized protein (322 aa).

The segment covering 1–13 (MTNADEQNMGQQE) has biased composition (polar residues). Disordered regions lie at residues 1–94 (MTNA…EEYE) and 125–322 (RREM…TDEE). The span at 14 to 31 (GTDTATTAQDTNTQTVGT) shows a compositional bias: low complexity. A compositionally biased stretch (polar residues) spans 32-50 (QSENTQNTQQASDAQTEQT). Over residues 64–75 (EVDEDDVLDAQE) the composition is skewed to acidic residues. 4 stretches are compositionally biased toward basic and acidic residues: residues 141–227 (GGDR…RGGD), 235–269 (RPRE…RGGD), 277–295 (RPRE…RTDD), and 308–322 (ARAD…TDEE).

This is an uncharacterized protein from Deinococcus radiodurans (strain ATCC 13939 / DSM 20539 / JCM 16871 / CCUG 27074 / LMG 4051 / NBRC 15346 / NCIMB 9279 / VKM B-1422 / R1).